We begin with the raw amino-acid sequence, 650 residues long: Probable acyl-CoA dehydrogenase FadE10 (650 aa).

Residues 1–23 (MAQQTQVTEEQARALAEESRESG) are disordered. Over residues 10-23 (EQARALAEESRESG) the composition is skewed to basic and acidic residues. E422 (proton acceptor) is an active-site residue.

It belongs to the acyl-CoA dehydrogenase family. FAD serves as cofactor.

It carries out the reaction a 2,3-saturated acyl-CoA + A = a 2,3-dehydroacyl-CoA + AH2. The chain is Probable acyl-CoA dehydrogenase FadE10 (fadE10) from Mycobacterium tuberculosis (strain CDC 1551 / Oshkosh).